Here is a 187-residue protein sequence, read N- to C-terminus: MNLQHHFLIAMPALQDPLFRRSVVYICEHNPDGAMGLIINKPLENLQIEGILEKLKITPEPRDPAIRLDKPVMLGGPLAEDRGFILHTPPSRFASSIRISDNTVVTTSRDVLETIGTPKQPADVLVALGYASWEKGQLEQEILDNAWLTAPADLNILFKTPIADRWRDAAKLIGVDILTMPGVAGHA.

This sequence belongs to the UPF0301 (AlgH) family.

This Escherichia fergusonii (strain ATCC 35469 / DSM 13698 / CCUG 18766 / IAM 14443 / JCM 21226 / LMG 7866 / NBRC 102419 / NCTC 12128 / CDC 0568-73) protein is UPF0301 protein YqgE.